Consider the following 59-residue polypeptide: Large ribosomal subunit protein uL30 (59 aa).

This sequence belongs to the universal ribosomal protein uL30 family. In terms of assembly, part of the 50S ribosomal subunit.

This Desulfatibacillum aliphaticivorans protein is Large ribosomal subunit protein uL30.